A 120-amino-acid polypeptide reads, in one-letter code: Peptidyl-tRNA hydrolase (120 aa).

This sequence belongs to the PTH2 family.

The protein localises to the cytoplasm. It carries out the reaction an N-acyl-L-alpha-aminoacyl-tRNA + H2O = an N-acyl-L-amino acid + a tRNA + H(+). Its function is as follows. The natural substrate for this enzyme may be peptidyl-tRNAs which drop off the ribosome during protein synthesis. This Sulfolobus acidocaldarius (strain ATCC 33909 / DSM 639 / JCM 8929 / NBRC 15157 / NCIMB 11770) protein is Peptidyl-tRNA hydrolase.